The chain runs to 179 residues: Cytochrome b6-f complex iron-sulfur subunit (179 aa).

The helical transmembrane segment at 21–43 (LLTFGTVTGVALGALYPVVNYFI) threads the bilayer. The Rieske domain maps to 61-162 (GNDIIVSEFL…ANVSDDKLVF (102 aa)). The [2Fe-2S] cluster site is built by C108, H110, C126, and H129. An intrachain disulfide couples C113 to C128.

It belongs to the Rieske iron-sulfur protein family. In terms of assembly, the 4 large subunits of the cytochrome b6-f complex are cytochrome b6, subunit IV (17 kDa polypeptide, PetD), cytochrome f and the Rieske protein, while the 4 small subunits are PetG, PetL, PetM and PetN. The complex functions as a dimer. The cofactor is [2Fe-2S] cluster.

It localises to the cellular thylakoid membrane. It carries out the reaction 2 oxidized [plastocyanin] + a plastoquinol + 2 H(+)(in) = 2 reduced [plastocyanin] + a plastoquinone + 4 H(+)(out). Component of the cytochrome b6-f complex, which mediates electron transfer between photosystem II (PSII) and photosystem I (PSI), cyclic electron flow around PSI, and state transitions. The sequence is that of Cytochrome b6-f complex iron-sulfur subunit from Trichodesmium erythraeum (strain IMS101).